The primary structure comprises 289 residues: Glycine--tRNA ligase alpha subunit (289 aa).

Belongs to the class-II aminoacyl-tRNA synthetase family. As to quaternary structure, tetramer of two alpha and two beta subunits.

It is found in the cytoplasm. The enzyme catalyses tRNA(Gly) + glycine + ATP = glycyl-tRNA(Gly) + AMP + diphosphate. This is Glycine--tRNA ligase alpha subunit from Rickettsia bellii (strain OSU 85-389).